The following is a 344-amino-acid chain: Adenosine kinase (344 aa).

Asp-298 is a catalytic residue.

It belongs to the carbohydrate kinase PfkB family. The cofactor is Mg(2+).

The catalysed reaction is adenosine + ATP = AMP + ADP + H(+). It functions in the pathway purine metabolism; AMP biosynthesis via salvage pathway; AMP from adenosine: step 1/1. This Schizophyllum commune (Split gill fungus) protein is Adenosine kinase (ADK).